A 300-amino-acid polypeptide reads, in one-letter code: MAFLKKYLLTILMVFLAYYYYSANEKFRPEMLQGKKVIVTGASKGIGREIAYHLAKMGAHVVVTARSKEALQKVVARCLELGAASAHYIAGSMEDMTFAEEFVAEAGNLMGGLDMLILNHVLYNRLTFFHGEIDNVRKSMEVNFHSFVVLSVAAMPMLMQSQGSIAVVSSVAGKITYPLIAPYSASKFALDGFFSTLRSEFLVNKVNVSITLCILGLIDTETAIKATSGIYLGPASPKEECALEIIKGTALRQDEMYYVGSRWVPYLLGNPGRKIMEFLSAAEYNWDNVLSNEKLYGRWA.

Topologically, residues 1–7 are cytoplasmic; that stretch reads MAFLKKY. The helical; Signal-anchor for type II membrane protein transmembrane segment at 8–24 threads the bilayer; sequence LLTILMVFLAYYYYSAN. Residues 25-300 lie on the Lumenal side of the membrane; that stretch reads EKFRPEMLQG…SNEKLYGRWA (276 aa). NADP(+)-binding positions include 41–67, 92–93, and 119–123; these read GASK…TARS, SM, and NHVLY. Ser-170 contacts substrate. Residue Tyr-183 is the Proton acceptor of the active site. 183-187 lines the NADP(+) pocket; it reads YSASK. A glycan (N-linked (GlcNAc...) asparagine) is linked at Asn-207. NADP(+) is bound at residue 218–222; that stretch reads IDTET.

It belongs to the short-chain dehydrogenases/reductases (SDR) family. In terms of assembly, homodimer. As to expression, widely expressed in all peripheral tissues, with highest expression in liver, followed by kidney and lung, and very low expression in heart, lung, spleen, stomach, small intestine, colon, skin, skeletal muscle, and ovary.

The protein resides in the endoplasmic reticulum membrane. The enzyme catalyses an 11beta-hydroxysteroid + NADP(+) = an 11-oxosteroid + NADPH + H(+). It catalyses the reaction cortisone + NADPH + H(+) = cortisol + NADP(+). It carries out the reaction corticosterone + NADP(+) = 11-dehydrocorticosterone + NADPH + H(+). The catalysed reaction is a 7beta-hydroxysteroid + NADP(+) = a 7-oxosteroid + NADPH + H(+). The enzyme catalyses 7-oxocholesterol + NADPH + H(+) = 7beta-hydroxycholesterol + NADP(+). It catalyses the reaction chenodeoxycholate + NADP(+) = 7-oxolithocholate + NADPH + H(+). It carries out the reaction 7-oxolithocholate + NADPH + H(+) = ursodeoxycholate + NADP(+). The catalysed reaction is glycochenodeoxycholate + NADP(+) = 7-oxoglycolithocholate + NADPH + H(+). The enzyme catalyses taurochenodeoxycholate + NADP(+) = 7-oxotaurolithocholate + NADPH + H(+). It catalyses the reaction tauroursodeoxycholate + NADP(+) = 7-oxotaurolithocholate + NADPH + H(+). It carries out the reaction glycoursodeoxycholate + NADP(+) = 7-oxoglycolithocholate + NADPH + H(+). The catalysed reaction is 7-oxopregnenolone + NADPH + H(+) = 7beta-hydroxypregnenolone + NADP(+). The enzyme catalyses 3beta,7alpha-dihydroxyandrost-5-en-17-one + NADP(+) = 3beta-hydroxy-5-androstene-7,17-dione + NADPH + H(+). It catalyses the reaction 3beta-hydroxy-5-androstene-7,17-dione + NADPH + H(+) = 3beta,7beta-dihydroxyandrost-5-en-17-one + NADP(+). It carries out the reaction 3beta-hydroxy-5alpha-androstane-7,17-dione + NADPH + H(+) = 3beta,7beta-dihydroxy-5alpha-androstan-17-one + NADP(+). Functionally, controls the reversible conversion of biologically active glucocorticoids such as cortisone to cortisol, and 11-dehydrocorticosterone to corticosterone in the presence of NADP(H). Participates in the corticosteroid receptor-mediated anti-inflammatory response, as well as metabolic and homeostatic processes. Bidirectional in vitro, predominantly functions as a reductase in vivo, thereby increasing the concentration of active glucocorticoids. It has broad substrate specificity, besides glucocorticoids, it accepts other steroid and sterol substrates. Interconverts 7-oxo- and 7-hydroxy-neurosteroids such as 7-oxopregnenolone and 7beta-hydroxypregnenolone, 7-oxodehydroepiandrosterone (3beta-hydroxy-5-androstene-7,17-dione) and 7beta-hydroxydehydroepiandrosterone (3beta,7beta-dihydroxyandrost-5-en-17-one), among others. Catalyzes the stereo-specific conversion of the major dietary oxysterol, 7-ketocholesterol (7-oxocholesterol), into the more polar 7-beta-hydroxycholesterol metabolite. 7-oxocholesterol is one of the most important oxysterols, it participates in several events such as induction of apoptosis, accumulation in atherosclerotic lesions, lipid peroxidation, and induction of foam cell formation. Mediates the 7-oxo reduction of 7-oxolithocholate mainly to chenodeoxycholate, and to a lesser extent to ursodeoxycholate, both in its free form and when conjugated to glycine or taurine, providing a link between glucocorticoid activation and bile acid metabolism. Catalyzes the synthesis of 7-beta-25-dihydroxycholesterol from 7-oxo-25-hydroxycholesterol in vitro, which acts as a ligand for the G-protein-coupled receptor (GPCR) Epstein-Barr virus-induced gene 2 (EBI2) and may thereby regulate immune cell migration. The polypeptide is 11-beta-hydroxysteroid dehydrogenase 1 (HSD11B1) (Cavia porcellus (Guinea pig)).